The sequence spans 77 residues: Probable Fe(2+)-trafficking protein (77 aa).

The protein belongs to the Fe(2+)-trafficking protein family. Monomer.

In terms of biological role, could be a mediator in iron transactions between iron acquisition and iron-requiring processes, such as synthesis and/or repair of Fe-S clusters in biosynthetic enzymes. This is Probable Fe(2+)-trafficking protein from Buchnera aphidicola subsp. Acyrthosiphon pisum (strain APS) (Acyrthosiphon pisum symbiotic bacterium).